The primary structure comprises 89 residues: Class I hydrophobin C (89 aa).

The signal sequence occupies residues 1-16 (MKFSLATIALAAAVAA). Intrachain disulfides connect Cys-28–Cys-68, Cys-39–Cys-60, Cys-40–Cys-52, and Cys-69–Cys-85. The N-linked (GlcNAc...) asparagine glycan is linked to Asn-36.

This sequence belongs to the fungal hydrophobin family.

It is found in the secreted. Its subcellular location is the cell wall. The protein localises to the vacuole. The protein resides in the cytoplasmic vesicle. Functionally, aerial growth, conidiation, and dispersal of filamentous fungi in the environment rely upon a capability of their secreting small amphipathic proteins called hydrophobins (HPBs) with low sequence identity. Class I can self-assemble into an outermost layer of rodlet bundles on aerial cell surfaces, conferring cellular hydrophobicity that supports fungal growth, development and dispersal; whereas Class II form highly ordered films at water-air interfaces through intermolecular interactions but contribute nothing to the rodlet structure. Hyd1C contributes to certain cell wall-related features, such as hydrophobicity but is not involved in cell wall-related events during fungal proliferation in host hemocoel. Does not contribute to conidial hydrophobicity. The sequence is that of Class I hydrophobin C from Beauveria bassiana (strain ARSEF 2860) (White muscardine disease fungus).